The chain runs to 337 residues: Mediator of RNA polymerase II transcription subunit 19 (337 aa).

Disordered regions lie at residues 1 to 38 (MMSN…KTTI), 155 to 234 (YVTP…LPGG), and 297 to 337 (QMSS…MSQF). Polar residues predominate over residues 28 to 38 (QDSSGTLKTTI). Basic residues-rich tracts occupy residues 159–171 (ARKH…KQKH) and 208–221 (RKKR…KKKN). A coiled-coil region spans residues 189–223 (LETYEKKHKKQKRHEDDKERKKRKKEKKRKKKNQS). The span at 297–309 (QMSSGGLLGSVLG) shows a compositional bias: low complexity. Over residues 310–330 (TSGGPGGGGGGGGGGGGGVGG) the composition is skewed to gly residues.

The protein belongs to the Mediator complex subunit 19 family. Component of the Mediator complex.

It is found in the nucleus. In terms of biological role, component of the Mediator complex, a coactivator involved in the regulated transcription of nearly all RNA polymerase II-dependent genes. Mediator functions as a bridge to convey information from gene-specific regulatory proteins to the basal RNA polymerase II transcription machinery. Mediator is recruited to promoters by direct interactions with regulatory proteins and serves as a scaffold for the assembly of a functional preinitiation complex with RNA polymerase II and the general transcription factors. This Drosophila melanogaster (Fruit fly) protein is Mediator of RNA polymerase II transcription subunit 19 (MED19).